Here is a 171-residue protein sequence, read N- to C-terminus: UPF0398 protein spyM18_1659 (171 aa).

This sequence belongs to the UPF0398 family.

This is UPF0398 protein spyM18_1659 from Streptococcus pyogenes serotype M18 (strain MGAS8232).